A 320-amino-acid chain; its full sequence is UV DNA damage endonuclease (320 aa).

The protein belongs to the uve1/UvsE family.

Component in a DNA repair pathway. Removal of UV LIGHT damaged nucleotides. Recognizes pyrimidine dimers and cleave a phosphodiester bond immediately 5' to the lesion. This is UV DNA damage endonuclease from Bacillus pumilus (strain SAFR-032).